A 180-amino-acid polypeptide reads, in one-letter code: Pro-glucagon (180 aa).

Residues 1–20 (MKTIYFVAGLFVMLVQGSWQ) form the signal peptide. The tract at residues 25–59 (NTEEKSRSFPAPQTDPLDDPDQMTEDKRHSQGTFT) is disordered. Residue Ser-54 is modified to Phosphoserine. Positions 84-89 (NKNNIA) are excised as a propeptide. Residues Ser-105 and Ser-108 each carry the phosphoserine modification. Arg-127 bears the Arginine amide mark. A propeptide spanning residues 131–145 (DFPEEVTIVEELRRR) is cleaved from the precursor. Ser-150 and Ser-152 each carry phosphoserine.

This sequence belongs to the glucagon family. In terms of processing, proglucagon is post-translationally processed in a tissue-specific manner in pancreatic A cells and intestinal L cells. In pancreatic A cells, the major bioactive hormone is glucagon cleaved by PCSK2/PC2. In the intestinal L cells PCSK1/PC1 liberates GLP-1, GLP-2, glicentin and oxyntomodulin. GLP-1 is further N-terminally truncated by post-translational processing in the intestinal L cells resulting in GLP-1(7-37) GLP-1-(7-36)amide. The C-terminal amidation is neither important for the metabolism of GLP-1 nor for its effects on the endocrine pancreas. Glucagon is secreted in the A cells of the islets of Langerhans. GLP-1, GLP-2, oxyntomodulin and glicentin are secreted from enteroendocrine cells throughout the gastrointestinal tract. GLP-1 and GLP-2 are also secreted in selected neurons in the brain.

It is found in the secreted. Its function is as follows. Plays a key role in glucose metabolism and homeostasis. Regulates blood glucose by increasing gluconeogenesis and decreasing glycolysis. A counterregulatory hormone of insulin, raises plasma glucose levels in response to insulin-induced hypoglycemia. Plays an important role in initiating and maintaining hyperglycemic conditions in diabetes. Potent stimulator of glucose-dependent insulin release. Also stimulates insulin release in response to IL6. Plays important roles on gastric motility and the suppression of plasma glucagon levels. May be involved in the suppression of satiety and stimulation of glucose disposal in peripheral tissues, independent of the actions of insulin. Has growth-promoting activities on intestinal epithelium. May also regulate the hypothalamic pituitary axis (HPA) via effects on LH, TSH, CRH, oxytocin, and vasopressin secretion. Increases islet mass through stimulation of islet neogenesis and pancreatic beta cell proliferation. Inhibits beta cell apoptosis. Functionally, stimulates intestinal growth and up-regulates villus height in the small intestine, concomitant with increased crypt cell proliferation and decreased enterocyte apoptosis. The gastrointestinal tract, from the stomach to the colon is the principal target for GLP-2 action. Plays a key role in nutrient homeostasis, enhancing nutrient assimilation through enhanced gastrointestinal function, as well as increasing nutrient disposal. Stimulates intestinal glucose transport and decreases mucosal permeability. In terms of biological role, significantly reduces food intake. Inhibits gastric emptying in humans. Suppression of gastric emptying may lead to increased gastric distension, which may contribute to satiety by causing a sensation of fullness. Its function is as follows. May modulate gastric acid secretion and the gastro-pyloro-duodenal activity. May play an important role in intestinal mucosal growth in the early period of life. The protein is Pro-glucagon (GCG) of Sus scrofa (Pig).